The following is a 364-amino-acid chain: Peroxidase (364 aa).

Residues 1–20 (MKLSLFSTFAAVIIGALALP) form the signal peptide. Position 21 is a pyrrolidone carboxylic acid (Gln-21). Intrachain disulfides connect Cys-32/Cys-44, Cys-43/Cys-313, Cys-63/Cys-149, and Cys-277/Cys-342. Catalysis depends on His-76, which acts as the Proton acceptor. Ca(2+)-binding residues include Asp-77, Gly-95, Asp-97, and Ser-99. A glycan (N-linked (GlcNAc...) (high mannose) asparagine) is linked at Asn-163. Residue His-204 participates in heme b binding. Residues Ser-205, Asp-222, Thr-224, Val-227, and Asp-229 each contribute to the Ca(2+) site.

Belongs to the peroxidase family. Ligninase subfamily. It depends on Ca(2+) as a cofactor. Heme b serves as cofactor.

It is found in the secreted. It carries out the reaction 2 a phenolic donor + H2O2 = 2 a phenolic radical donor + 2 H2O. This is Peroxidase from Arthromyces ramosus.